A 514-amino-acid chain; its full sequence is Na(+)/H(+) antiporter NhaB (514 aa).

A run of 12 helical transmembrane segments spans residues 23–43 (LALL…PFIA), 63–83 (PLLP…TSAA), 97–117 (LLLM…LFIF), 120–140 (LLLS…AAAF), 144–164 (FLDA…FYGI), 202–222 (LMMH…VGEP), 238–258 (FFLR…LTCM), 303–323 (AIIG…VGLI), 357–377 (LTVF…APII), 391–411 (LFYL…VGTI), 447–467 (ATPN…APLI), and 475–495 (VWMA…CVEF).

The protein belongs to the NhaB Na(+)/H(+) (TC 2.A.34) antiporter family.

The protein resides in the cell inner membrane. It catalyses the reaction 2 Na(+)(in) + 3 H(+)(out) = 2 Na(+)(out) + 3 H(+)(in). Functionally, na(+)/H(+) antiporter that extrudes sodium in exchange for external protons. The sequence is that of Na(+)/H(+) antiporter NhaB from Salmonella heidelberg (strain SL476).